We begin with the raw amino-acid sequence, 397 residues long: Homeobox protein knotted-1-like 2 (397 aa).

Disordered regions lie at residues 43-68, 172-191, and 233-276; these read TFHL…SPGT, FEAR…DPEL, and NNNA…PRAE. Gly residues predominate over residues 49–58; it reads SGGGGGGGSG. The 21-residue stretch at 279-299 folds into the ELK domain; sequence ELKNHLLRKYSGYLSSLKQEL. The homeobox; TALE-type DNA-binding region spans 300 to 363; that stretch reads SKKKKKGKLP…NQRKRHWKPS (64 aa).

Belongs to the TALE/KNOX homeobox family. As to expression, expressed only in the stems.

It is found in the nucleus. Its function is as follows. Probably binds to the DNA sequence 5'-TGAC-3'. This Malus domestica (Apple) protein is Homeobox protein knotted-1-like 2.